We begin with the raw amino-acid sequence, 130 residues long: kinetoplast-associated protein 2-2 (130 aa).

The propeptide occupies 1–10 (MLRRTVSNFA). The segment at 95 to 130 (ETKQAQRAKAQKAQKKPKSAKSKVKKAAKKAKKSKK) is disordered. A compositionally biased stretch (basic residues) spans 103–130 (KAQKAQKKPKSAKSKVKKAAKKAKKSKK).

Belongs to the KAP family. In terms of assembly, associates with the kinetoplast DNA network.

The protein resides in the mitochondrion matrix. The protein localises to the kinetoplast. Functionally, histone H1-like DNA-binding protein involved in the organization and segregation of kinetoplast DNA (kDNA). The mitochondrial DNA of kinetoplastid protozoa consists of about 5,000 minicircles and 20 to 30 maxicircles. These circular DNAs are held together by catenation into a highly organized compact disk structure referred to as a kinetoplast DNA (kDNA) network. Binds preferentially to a specific fragment of minicircle DNA and is able to compact kDNA networks through DNA charge neutralization and condensation. The polypeptide is kinetoplast-associated protein 2-2 (KAP2-2) (Crithidia fasciculata).